Here is a 152-residue protein sequence, read N- to C-terminus: Snaclec agkisacutacin subunit A (152 aa).

Residues 1 to 23 form the signal peptide; that stretch reads MGRFIFVSFGLLVVFLSLSGTAA. The region spanning 24–152 is the C-type lectin domain; it reads DCSSGWSSYE…EQQDPFVCEA (129 aa). 3 disulfide bridges follow: Cys25/Cys36, Cys53/Cys150, and Cys125/Cys142. 3 residues coordinate Ca(2+): Ser64, Glu66, and Glu70. Residue Glu151 coordinates Ca(2+).

The protein belongs to the snaclec family. In terms of assembly, heterodimer with subunit B of AaACP or agkisacutacin; disulfide-linked. As to expression, expressed by the venom gland.

Its subcellular location is the secreted. Its function is as follows. Anticoagulant protein which binds to the gamma-carboxyglutamic acid-domain regions of factors IX (F9) and factor X (F10) in the presence of calcium with a 1 to 1 stoichiometry. Also inhibits platelet aggregation by binding to platelet glycoprotein Ibalpha (GP1BA) and functioning as a blocker of von Willebrand factor (VWF). Is devoid of hemorrhagic and lethal activities. Possesses antithrombotic and thrombolytic activities. Also hydrolyzes the Aalpha-chain of fibrinogen (FGA). Does not affect the Bbeta-chain (FGB) and the gamma chain (FGG). In Deinagkistrodon acutus (Hundred-pace snake), this protein is Snaclec agkisacutacin subunit A.